The sequence spans 737 residues: MPHDDHKGSRLSLLLFYFLAFLLLWEWLRPLDSFTETKHTGFFSVFIGLTFLLTFFRMRWFVTVPFCVIFTLISIHILFYQGSIFDLSWVSSFLQDVYLNITLIQSGQWNDMIPSFRTLLFFVLLWLLVYLLHYWVIYQRRILFFFLMTVAYITILDTFTPYDATFAVIRIVLIGFFMLGLLYLERIKLMERITLPKTSVLKWFLPLSVLVLAATGFGLAAPKSEPAWPDPVPFLKKITHQDRVSAGESKIGYGNHDESLGGPFQQDATPVFTWQGKERTYFRVETKDTYTGKGWIETDTGMSYQLSNGKVENLWFDHKVATERRTVRVKVDKHYGYNHLMYPIGAETIQPKQAVSLEMNGNTEQISPISEQAGEIRNMGNYTVTYNSPVYKLDELRKVKVRKNSEEYTFSDRYMQLPDSLPERVRTLAIKLTQDHDNMFDKVKAVEDYLGSNAFTYETENVTIPKNDEDYVDQFLFETKMGYCDNFSSAMVVLLRSAGIPARWVKGYTSGEYKEAGNKNGSIYEVTNNNAHSWVEVYFPEQGWVTFEPTKGFTNPAQFTSSDTKDSGSDSSSSPKKAKEKQKEEKKQPQKEEKQKEKREPAVSKKPSASHTNAGAGLYAALAVLAVLLVAAVLLYVFRSLWIPVFAVRKLKRRSDQHAFFEAYGALLKQLKRKGLPKRDSETLRDYAKRIDEKYDIEDMSKLTLSYERALYRNEDSSALWNDSRELWENLIKRRWS.

7 helical membrane passes run 11 to 31 (LSLLLFYFLAFLLLWEWLRPL), 36 to 56 (ETKHTGFFSVFIGLTFLLTFF), 60 to 80 (WFVTVPFCVIFTLISIHILFY), 118 to 138 (TLLFFVLLWLLVYLLHYWVIY), 142 to 162 (ILFFFLMTVAYITILDTFTPY), 164 to 184 (ATFAVIRIVLIGFFMLGLLYL), and 200 to 220 (VLKWFLPLSVLVLAATGFGLA). The tract at residues 556–611 (PAQFTSSDTKDSGSDSSSSPKKAKEKQKEEKKQPQKEEKQKEKREPAVSKKPSASH) is disordered. Residues 581–603 (KQKEEKKQPQKEEKQKEKREPAV) show a composition bias toward basic and acidic residues. The helical transmembrane segment at 618-638 (LYAALAVLAVLLVAAVLLYVF) threads the bilayer.

It localises to the cell membrane. This is an uncharacterized protein from Bacillus subtilis (strain 168).